The sequence spans 561 residues: Putative transport protein YbjL (561 aa).

5 helical membrane-spanning segments follow: residues 8–28 (LLNG…LCLG), 32–52 (LGSV…LLGQ), 66–86 (FMLF…SIFF), 94–114 (MLAL…GKLF), and 158–178 (NLSL…IVGA). 2 consecutive RCK C-terminal domains span residues 200-288 (RGLD…SFRN) and 292-373 (VFDR…RIGF). 5 helical membrane passes run 383 to 403 (LLAF…TFQF), 406 to 426 (FSFG…LGFL), 447 to 467 (FGLM…ISNG), 475 to 495 (MLIA…LFGA), and 540 to 560 (AIAN…WPGL).

Belongs to the AAE transporter (TC 2.A.81) family. YbjL subfamily.

The protein localises to the cell membrane. The sequence is that of Putative transport protein YbjL from Salmonella typhi.